Consider the following 123-residue polypeptide: Large ribosomal subunit protein uL14 (123 aa).

It belongs to the universal ribosomal protein uL14 family. In terms of assembly, part of the 50S ribosomal subunit. Forms a cluster with proteins L3 and L19. In the 70S ribosome, L14 and L19 interact and together make contacts with the 16S rRNA in bridges B5 and B8.

Its function is as follows. Binds to 23S rRNA. Forms part of two intersubunit bridges in the 70S ribosome. The sequence is that of Large ribosomal subunit protein uL14 from Blochmanniella pennsylvanica (strain BPEN).